Here is a 268-residue protein sequence, read N- to C-terminus: Microtubule-associated protein RP/EB family member 1 (268 aa).

A2 carries the N-acetylalanine modification. In terms of domain architecture, Calponin-homology (CH) spans 14–116 (NLSRHDMLAW…FVQWFKKFFD (103 aa)). The residue at position 66 (K66) is an N6-crotonyllysine. Residue Y124 is modified to Phosphotyrosine. The tract at residues 124–268 (YDPVAARQGQ…GGPQEEQEEY (145 aa)) is interaction with MTUS2/TIP150. Residues 146 to 191 (LSKPKKPLGSGSAAPQRPIATQRTTAAPKAGPGMVRKNPGMGNGDD) form a disordered region. S155 is modified (phosphoserine). Residues 185 to 255 (GMGNGDDEAA…LYATDEGFVI (71 aa)) enclose the EB1 C-terminal domain. The interaction with APC stretch occupies residues 206–211 (TVEDLE). Residues 208–268 (EDLEKERDFY…GGPQEEQEEY (61 aa)) form a DCTN1-binding region. K220 is subject to N6-acetyllysine. The interval 220-242 (KLRNIELICQENEGENDPVLQRI) is APC-binding. The segment at 232–255 (EGENDPVLQRIVDILYATDEGFVI) is interaction with SKA1.

It belongs to the MAPRE family. In terms of assembly, homodimer. Heterodimer with MAPRE3. Interacts with DCTN1, DCTN2, TERF1 and dynein intermediate chain. Interaction with DIAPH1 and DIAPH2. Interacts (via C-terminal residues 206-211) with APC (via C-terminal residues 2674-2845); the interaction inhibits association with and bundling of F-actin. Interacts with CLASP2, DST, KIF2C and STIM1; probably required for their targeting to the growing microtubule plus ends. Interacts with MTUS2; interaction is direct and probably targets MTUS2 to microtubules. Interacts (via C-terminus) with SKA1 (via SXIP motif); the interaction is direct and stabilizes the kinetochore-microtubule attachment of the SKA1 complex. Interacts with APC2. Interacts with CLASP1. Interacts with CDK5RAP2. According to another report, MAPRE1 does not interact with CDK5RAP2. Interacts with MACF1. Interacts with RABL2/RABL2A; binds preferentially to GTP-bound RABL2. Interacts with KCNAB2. Interacts (via C-terminus) with CLIP1. Interacts with SLAIN2 and SLAIN1. Interacts with KIF18B; this interaction is required for efficient accumulation of KIF18B at microtubule plus ends. Interacts with MISP. Interacts with KNSTRN. Interacts with NCKAP5L. Interacts with AKAP9. Interacts with PDE4DIP; this interaction, which is PDE4DIP isoform-specific, is required for its recruitment to the Golgi apparatus. Interacts with CAMSAP2. May form a pericentrosomal complex with AKAP9, CDK5RAP2 and PDE4DIP isoform 2/MMG8/SMYLE; within this complex, MAPRE1 binding to CDK5RAP2 may be mediated by PDE4DIP. Contrary to other mammalian species, does not interact with CDK5RAP2, possibly due to the lack of conservation of the MAPRE1-binding motif in rat CDK5RAP2. Interacts with AKNA. Interacts with GAS2L1, GAS2L2, and GAS2L3. Interacts with RARRES1 and AGBL2. Acetylation at Lys-220 by KAT2B/PCAF promotes dynamic kinetochore-microtubule interactions in early mitosis. In terms of processing, crotonylated by KAT5 during mitosis, promoting astral microtubule plasticity and dynamic connection between astral microtubules and the cortex during mitotic chromosome segregation, thereby ensuring accurate spindle positioning in mitosis. Decrotonylated by HDAC3.

The protein resides in the cytoplasm. It localises to the cytoskeleton. The protein localises to the microtubule organizing center. Its subcellular location is the centrosome. It is found in the golgi apparatus. The protein resides in the spindle. It localises to the spindle pole. Its function is as follows. Plus-end tracking protein (+TIP) that binds to the plus-end of microtubules and regulates the dynamics of the microtubule cytoskeleton. Recruits other +TIP proteins to microtubules by binding to a conserved Ser-X-Leu-Pro (SXLP) motif in their polypeptide chains. Promotes cytoplasmic microtubule nucleation and elongation. Involved in mitotic spindle positioning by stabilizing microtubules and promoting dynamic connection between astral microtubules and the cortex during mitotic chromosome segregation. Assists chromosome alignment in metaphase by recruiting the SKA complex to the spindle and stabilizing its interactions with microtubule bundles (K-fibers). Also acts as a regulator of minus-end microtubule organization: interacts with the complex formed by AKAP9 and PDE4DIP, leading to recruit CAMSAP2 to the Golgi apparatus, thereby tethering non-centrosomal minus-end microtubules to the Golgi, an important step for polarized cell movement. Promotes elongation of CAMSAP2-decorated microtubule stretches on the minus-end of microtubules. Acts as a regulator of autophagosome transport via interaction with CAMSAP2. Functions downstream of Rho GTPases and DIAPH1 in stable microtubule formation. May play a role in cell migration. This chain is Microtubule-associated protein RP/EB family member 1 (Mapre1), found in Rattus norvegicus (Rat).